The primary structure comprises 371 residues: Phospho-N-acetylmuramoyl-pentapeptide-transferase (371 aa).

11 helical membrane-spanning segments follow: residues 21–41, 46–66, 92–112, 119–139, 156–176, 182–202, 216–236, 241–261, 268–288, 296–316, and 349–369; these read NHIL…DFYY, LTIP…IGIP, PTMG…ILYF, IILT…IDDF, ILLQ…NNLI, IANK…FVLL, GLLS…ILIE, NSTL…FLFL, LFMG…IALI, LIMG…VSIF, and IVSS…IFLI.

The protein belongs to the glycosyltransferase 4 family. MraY subfamily. Requires Mg(2+) as cofactor.

It localises to the cell inner membrane. The catalysed reaction is UDP-N-acetyl-alpha-D-muramoyl-L-alanyl-gamma-D-glutamyl-meso-2,6-diaminopimeloyl-D-alanyl-D-alanine + di-trans,octa-cis-undecaprenyl phosphate = di-trans,octa-cis-undecaprenyl diphospho-N-acetyl-alpha-D-muramoyl-L-alanyl-D-glutamyl-meso-2,6-diaminopimeloyl-D-alanyl-D-alanine + UMP. Its pathway is cell wall biogenesis; peptidoglycan biosynthesis. In terms of biological role, catalyzes the initial step of the lipid cycle reactions in the biosynthesis of the cell wall peptidoglycan: transfers peptidoglycan precursor phospho-MurNAc-pentapeptide from UDP-MurNAc-pentapeptide onto the lipid carrier undecaprenyl phosphate, yielding undecaprenyl-pyrophosphoryl-MurNAc-pentapeptide, known as lipid I. The sequence is that of Phospho-N-acetylmuramoyl-pentapeptide-transferase from Prochlorococcus marinus (strain NATL2A).